Here is a 793-residue protein sequence, read N- to C-terminus: Wall-associated receptor kinase-like 18 (793 aa).

The first 28 residues, 1-28, serve as a signal peptide directing secretion; it reads MSNESTNCSFFLNLFMLLLLLIFYSADA. Topologically, residues 29–378 are extracellular; that stretch reads CQRECGGISI…YRCVRDKTKA (350 aa). Asn60, Asn130, Asn170, Asn238, Asn285, and Asn304 each carry an N-linked (GlcNAc...) asparagine glycan. Positions 312–371 are atypical EGF-like; sequence CTCGRITISETSYANCGCTYGYTGNPYVLNGCKDIDECKVKFEYCGKTETCVNFEGGYRC. 3 disulfides stabilise this stretch: Cys314-Cys327, Cys349-Cys362, and Cys356-Cys371. A helical membrane pass occupies residues 379–399; that stretch reads IMIGAGTGFGVLVLVGGLWWL. At 400 to 793 the chain is on the cytoplasmic side; the sequence is RKFLIKRRIT…VEPLFPRLTW (394 aa). Residues 453-728 form the Protein kinase domain; the sequence is FSENRVLGHG…REVFTELERI (276 aa). Residues 459-467 and Lys481 contribute to the ATP site; that span reads LGHGGQGTV. Residue Tyr526 is modified to Phosphotyrosine. Asp579 acts as the Proton acceptor in catalysis. Phosphothreonine occurs at positions 613 and 618. The residue at position 626 (Tyr626) is a Phosphotyrosine. The segment at 733-757 is disordered; that stretch reads EDSQVHNRIDEEEEEEEEEEEVVTT. Residues 742–754 show a composition bias toward acidic residues; that stretch reads DEEEEEEEEEEEV.

The protein belongs to the protein kinase superfamily. Ser/Thr protein kinase family.

It localises to the membrane. The enzyme catalyses L-seryl-[protein] + ATP = O-phospho-L-seryl-[protein] + ADP + H(+). It catalyses the reaction L-threonyl-[protein] + ATP = O-phospho-L-threonyl-[protein] + ADP + H(+). Serine/threonine-protein kinase that may function as a signaling receptor of extracellular matrix component. The chain is Wall-associated receptor kinase-like 18 (WAKL18) from Arabidopsis thaliana (Mouse-ear cress).